Here is a 311-residue protein sequence, read N- to C-terminus: Acetyl-coenzyme A carboxylase carboxyl transferase subunit alpha (311 aa).

Positions 34–286 (EKDLQKEASK…KEYYLQNIRE (253 aa)) constitute a CoA carboxyltransferase C-terminal domain.

This sequence belongs to the AccA family. Acetyl-CoA carboxylase is a heterohexamer composed of biotin carboxyl carrier protein (AccB), biotin carboxylase (AccC) and two subunits each of ACCase subunit alpha (AccA) and ACCase subunit beta (AccD).

Its subcellular location is the cytoplasm. It catalyses the reaction N(6)-carboxybiotinyl-L-lysyl-[protein] + acetyl-CoA = N(6)-biotinyl-L-lysyl-[protein] + malonyl-CoA. It participates in lipid metabolism; malonyl-CoA biosynthesis; malonyl-CoA from acetyl-CoA: step 1/1. Component of the acetyl coenzyme A carboxylase (ACC) complex. First, biotin carboxylase catalyzes the carboxylation of biotin on its carrier protein (BCCP) and then the CO(2) group is transferred by the carboxyltransferase to acetyl-CoA to form malonyl-CoA. The polypeptide is Acetyl-coenzyme A carboxylase carboxyl transferase subunit alpha (Nitratiruptor sp. (strain SB155-2)).